The chain runs to 579 residues: Polyadenylate-binding protein, cytoplasmic and nuclear (579 aa).

Basic and acidic residues predominate over residues 1–10 (MADITEKTAE). The interval 1–32 (MADITEKTAEQLENLSLQDKQEGTNEENQSET) is disordered. RRM domains are found at residues 35-113 (ASLY…WSQR), 123-200 (GNIF…PHLS), 216-293 (TNVY…RAQK), and 319-396 (INLF…IAQR). Residues 487-566 (GFARNGPAAN…ASAAYESFKQ (80 aa)) form the PABC domain. Positions 560–579 (AYESFKQEQQQPQGEEAQQA) are disordered. Positions 566 to 579 (QEQQQPQGEEAQQA) are enriched in low complexity.

Belongs to the polyadenylate-binding protein type-1 family.

It is found in the cytoplasm. The protein localises to the nucleus. In terms of biological role, binds the poly(A) tail of mRNA. Appears to be an important mediator of the multiple roles of the poly(A) tail in mRNA biogenesis, stability and translation. In the nucleus, involved in both mRNA cleavage and polyadenylation. Is also required for efficient mRNA export to the cytoplasm. Acts in concert with a poly(A)-specific nuclease (PAN) to affect poly(A) tail shortening, which may occur concomitantly with either nucleocytoplasmic mRNA transport or translational initiation. In the cytoplasm, stimulates translation initiation and regulates mRNA decay through translation termination-coupled poly(A) shortening, probably mediated by PAN. The protein is Polyadenylate-binding protein, cytoplasmic and nuclear (PAB1) of Candida glabrata (strain ATCC 2001 / BCRC 20586 / JCM 3761 / NBRC 0622 / NRRL Y-65 / CBS 138) (Yeast).